A 355-amino-acid chain; its full sequence is Peptide chain release factor 1 (355 aa).

An N5-methylglutamine modification is found at Gln233.

It belongs to the prokaryotic/mitochondrial release factor family. Methylated by PrmC. Methylation increases the termination efficiency of RF1.

The protein resides in the cytoplasm. Functionally, peptide chain release factor 1 directs the termination of translation in response to the peptide chain termination codons UAG and UAA. The polypeptide is Peptide chain release factor 1 (Clostridium tetani (strain Massachusetts / E88)).